Here is a 328-residue protein sequence, read N- to C-terminus: MKLGELELREEWQDEEFPRLLPEEPGSPGDPEDPQRGSQAGTPSSLALCGQRPMRKRLSAPEWQLSLTEGTGENGASPTRSASSSSAGSLDLEVDELETPSDSEQLDSGHEFEWEDDLPRAEGLGASEAAERLGRGCVCDVAGEDGHRWRVFRTGQREQRVDMTIIEPYKKVLSHGGYHGDGLNAVILFASCYLPRSSIPNYTYIMEHLFRYMVGTLELLVAENYLLVHLSGGTSRAQVPPLSWIRQCYRTLDRRLRKNLRALVVVHATWYVKAFLALVRPFISSKFTRKIRFLDSLGELAQLISLEQVHIPEVVRQLDRDLHGSKGT.

Over residues methionine 1 to proline 22 the composition is skewed to basic and acidic residues. Residues methionine 1–aspartate 116 form a disordered region. A compositionally biased stretch (polar residues) spans arginine 36–serine 45. Residues alanine 76–serine 89 are compositionally biased toward low complexity. Residues leucine 92–glutamine 105 are compositionally biased toward acidic residues. Residues aspartate 107–aspartate 116 are compositionally biased toward basic and acidic residues. The CRAL-TRIO domain maps to aspartate 162–histidine 323.

In terms of assembly, homodimer. Interacts with BCL2, ARHGAP1, MIF and GFER.

May be a bridge molecule between BCL2 and ARHGAP1/CDC42 in promoting cell death. This is Bcl-2/adenovirus E1B 19 kDa-interacting protein 2-like protein (Bnipl) from Mus musculus (Mouse).